A 599-amino-acid chain; its full sequence is Tryptophan 2-C-methyltransferase (599 aa).

Residues 4 to 149 (KGTVALINPN…RALAEGRSAD (146 aa)) enclose the B12-binding domain. Residues 167–197 (RVAPPALDPRAAPAPSSSPSPSPAPSSSSAP) form a disordered region. Residues 168-181 (VAPPALDPRAAPAP) show a composition bias toward low complexity. The Radical SAM core domain maps to 239–492 (YREGGLGSIL…IEYERQFMFD (254 aa)). Residues C253, C257, and C260 each contribute to the [4Fe-4S] cluster site.

[4Fe-4S] cluster serves as cofactor. It depends on cob(II)alamin as a cofactor.

It carries out the reaction L-tryptophan + S-adenosyl-L-methionine = 2-methyl-L-tryptophan + S-adenosyl-L-homocysteine + H(+). In terms of biological role, involved in the biosynthetic pathway of the antibiotic thiostrepton A. First, TsrM catalyzes the transfer of a methyl group from S-adenosyl methionine (SAM) to cobalamin, leading to the formation of methylcobalamin (CH3-cobalamin) and S-adenosyl-L-homocysteine (SAH). Then the methyl group is transferred to the C2 position of tryptophan (Trp) with the concerted action of the radical SAM [4Fe-4S] center, leading to the production of methyltryptophan. This is Tryptophan 2-C-methyltransferase from Streptomyces laurentii.